Here is a 306-residue protein sequence, read N- to C-terminus: Ribosomal RNA small subunit methyltransferase H (306 aa).

S-adenosyl-L-methionine contacts are provided by residues 33–35 (GGY), D51, F78, D96, and Q103.

Belongs to the methyltransferase superfamily. RsmH family.

Its subcellular location is the cytoplasm. It carries out the reaction cytidine(1402) in 16S rRNA + S-adenosyl-L-methionine = N(4)-methylcytidine(1402) in 16S rRNA + S-adenosyl-L-homocysteine + H(+). Functionally, specifically methylates the N4 position of cytidine in position 1402 (C1402) of 16S rRNA. This Rickettsia felis (strain ATCC VR-1525 / URRWXCal2) (Rickettsia azadi) protein is Ribosomal RNA small subunit methyltransferase H.